Consider the following 356-residue polypeptide: D-amino-acid oxidase (356 aa).

The first 17 residues, 1–17 (MAKIVVIGAGVAGLTTA), serve as a signal peptide directing secretion. Positions 9, 44, 48, and 50 each coordinate FAD. Phe-54 is a binding site for anthranilate. Position 171 (Val-171) interacts with FAD. An N-linked (GlcNAc...) asparagine glycan is attached at Asn-192. Tyr-243 is an anthranilate binding site. Tyr-243 serves as a coordination point for (R)-lactate. The N-linked (GlcNAc...) asparagine glycan is linked to Asn-262. FAD is bound by residues Arg-302, Ala-329, Gly-332, Tyr-333, and Gln-334. Arg-302 is a binding site for anthranilate. Arg-302 contacts (R)-lactate.

Belongs to the DAMOX/DASOX family. FAD is required as a cofactor.

It localises to the peroxisome matrix. It carries out the reaction a D-alpha-amino acid + O2 + H2O = a 2-oxocarboxylate + H2O2 + NH4(+). The enzyme catalyses D-alanine + O2 + H2O = pyruvate + H2O2 + NH4(+). The catalysed reaction is D-serine + O2 + H2O = 3-hydroxypyruvate + H2O2 + NH4(+). It catalyses the reaction D-phenylalanine + O2 + H2O = 3-phenylpyruvate + H2O2 + NH4(+). It carries out the reaction D-lysine + O2 + H2O = 6-amino-2-oxohexanoate + H2O2 + NH4(+). The enzyme catalyses D-tyrosine + O2 + H2O = 3-(4-hydroxyphenyl)pyruvate + H2O2 + NH4(+). The catalysed reaction is D-methionine + O2 + H2O = 4-methylsulfanyl-2-oxobutanoate + H2O2 + NH4(+). It catalyses the reaction D-tryptophan + O2 + H2O = indole-3-pyruvate + H2O2 + NH4(+). It carries out the reaction D-leucine + O2 + H2O = 4-methyl-2-oxopentanoate + H2O2 + NH4(+). The enzyme catalyses D-valine + O2 + H2O = 3-methyl-2-oxobutanoate + H2O2 + NH4(+). Inhibited by benzoate and hypochlorite. Catalyzes the oxidative deamination of D-amino acids with broad substrate specificity. Enables the organism to utilize D-amino acids as a source of nutrients. The polypeptide is D-amino-acid oxidase (Trigonopsis variabilis (Yeast)).